A 557-amino-acid polypeptide reads, in one-letter code: Organic cation/carnitine transporter 2 (557 aa).

The Cytoplasmic segment spans residues 1-20 (MRDYDEVTAFLGEWGPFQRL). Residues 21-41 (IFFLLSASIIPNGFTGLSSVF) form a helical membrane-spanning segment. At 42–142 (LIATPEHRCR…NLVCEDDWKA (101 aa)) the chain is on the extracellular side. Asn-57, Asn-64, and Asn-91 each carry an N-linked (GlcNAc...) asparagine glycan. A helical membrane pass occupies residues 143-163 (PLTISLFFVGVLLGSFISGQL). At 164-172 (SDRFGRKNV) the chain is on the cytoplasmic side. The chain crosses the membrane as a helical span at residues 173–193 (LFVTMGMQTGFSFLQIFSKNF). The Extracellular portion of the chain corresponds to 194-197 (EMFV). Residues 198–218 (VLFVLVGMGQISNYVAAFVLG) form a helical membrane-spanning segment. 218–225 (GTEILGKS) is a binding site for ATP. The Cytoplasmic segment spans residues 219–232 (TEILGKSVRIIFST). A helical membrane pass occupies residues 233–253 (LGVCIFYAFGYMVLPLFAYFI). Over 254-257 (RDWR) the chain is Extracellular. Residues 258-278 (MLLVALTMPGVLCVALWWFIP) form a helical membrane-spanning segment. The Cytoplasmic segment spans residues 279 to 341 (ESPRWLISQG…LDLLRTWNIR (63 aa)). A helical membrane pass occupies residues 342-362 (MVTIMSIMLWMTISVGYFGLS). The Extracellular portion of the chain corresponds to 363-373 (LDTPNLHGDIF). Residues 374–394 (VNCFLSAMVEVPAYVLAWLLL) form a helical membrane-spanning segment. The Cytoplasmic segment spans residues 395–406 (QYLPRRYSMATA). The chain crosses the membrane as a helical span at residues 407-427 (LFLGGSVLLFMQLVPPDLYYL). The Extracellular segment spans residues 428-430 (ATV). The chain crosses the membrane as a helical span at residues 431-451 (LVMVGKFGVTAAFSMVYVYTA). Residues 452-462 (ELYPTVVRNMG) are Cytoplasmic-facing. Residues 463 to 483 (VGVSSTASRLGSILSPYFVYL) traverse the membrane as a helical segment. The Extracellular segment spans residues 484-488 (GAYDR). Tyr-486 is modified (phosphotyrosine). A helical transmembrane segment spans residues 489–509 (FLPYILMGSLTILTAILTLFL). The tract at residues 535–557 (TPSHTRMLKDGQERPTILKSTAF) is disordered. Thr-550 is subject to Phosphothreonine.

It belongs to the major facilitator (TC 2.A.1) superfamily. Organic cation transporter (TC 2.A.1.19) family. As to quaternary structure, interacts with PDZK1. In terms of processing, glycosylated. Glycosylation affects the expression levels. Post-translationally, not glycosylated. As to expression, strongly expressed in kidney, skeletal muscle, heart and placenta. Primarily expressed by surface epithelial cells of the colon (at protein level). Expressed in CD68 macrophage and CD43 T-cells but not in CD20 B-cells. In testis, localized to Sertoli cell basal membranes, peritubular myoid cells and Leydig cells.

Its subcellular location is the cell membrane. The protein resides in the apical cell membrane. The protein localises to the basal cell membrane. It localises to the endoplasmic reticulum. The enzyme catalyses (R)-carnitine(out) + Na(+)(out) = (R)-carnitine(in) + Na(+)(in). It carries out the reaction glycine betaine(out) + Na(+)(out) = glycine betaine(in) + Na(+)(in). It catalyses the reaction glycine betaine(out) + (R)-carnitine(in) = glycine betaine(in) + (R)-carnitine(out). The catalysed reaction is O-butanoyl-(R)-carnitine(out) + Na(+)(out) = O-butanoyl-(R)-carnitine(in) + Na(+)(in). The enzyme catalyses O-acetyl-(R)-carnitine(out) + Na(+)(out) = O-acetyl-(R)-carnitine(in) + Na(+)(in). It carries out the reaction O-propanoyl-(R)-carnitine(out) + Na(+)(out) = O-propanoyl-(R)-carnitine(in) + Na(+)(in). It catalyses the reaction (S)-carnitine(out) + Na(+)(out) = (S)-carnitine(in) + Na(+)(in). The catalysed reaction is an O-acyl-(R)-carnitine(out) + Na(+)(out) = an O-acyl-(R)-carnitine(in) + Na(+)(in). The enzyme catalyses L-glutamyl-L-arginyl-glycyl-L-methionyl-L-threonine(out) + Na(+)(out) = L-glutamyl-L-arginyl-glycyl-L-methionyl-L-threonine(in) + Na(+)(in). It carries out the reaction N,N-dimethylglycine(out) + Na(+)(out) = N,N-dimethylglycine(in) + Na(+)(in). Its activity is regulated as follows. Inhibited by emetine, quinidine and verapamil. The IC(50) of emetine is 4.2 uM. Not inhibited by valproic acid. Transport of (R)-carnitine is stimulated by cholesterol in the plasma membrane. Functionally, sodium-ion dependent, high affinity carnitine transporter. Involved in the active cellular uptake of carnitine. Transports one sodium ion with one molecule of carnitine. Also transports organic cations such as tetraethylammonium (TEA) without the involvement of sodium. Relative uptake activity ratio of carnitine to TEA is 11.3. In intestinal epithelia, transports the quorum-sensing pentapeptide CSF (competence and sporulation factor) from B.subtilis which induces cytoprotective heat shock proteins contributing to intestinal homeostasis. May also contribute to regulate the transport of organic compounds in testis across the blood-testis-barrier. Retained in the ER, unable to perform carnitine uptake. The polypeptide is Organic cation/carnitine transporter 2 (Homo sapiens (Human)).